The following is a 223-amino-acid chain: Endonuclease V (223 aa).

Residues Asp-35 and Asp-103 each coordinate Mg(2+).

This sequence belongs to the endonuclease V family. Requires Mg(2+) as cofactor.

It localises to the cytoplasm. The enzyme catalyses Endonucleolytic cleavage at apurinic or apyrimidinic sites to products with a 5'-phosphate.. Its function is as follows. DNA repair enzyme involved in the repair of deaminated bases. Selectively cleaves double-stranded DNA at the second phosphodiester bond 3' to a deoxyinosine leaving behind the intact lesion on the nicked DNA. The sequence is that of Endonuclease V from Salmonella paratyphi A (strain ATCC 9150 / SARB42).